Consider the following 402-residue polypeptide: Phosphoglycerate kinase (402 aa).

Substrate is bound by residues 24-26 (DFN), Arg-40, 63-66 (HFGR), Arg-122, and Arg-155. ATP is bound by residues Lys-206, Gly-297, Glu-328, and 357–360 (GGDS).

It belongs to the phosphoglycerate kinase family. In terms of assembly, monomer.

Its subcellular location is the cytoplasm. It catalyses the reaction (2R)-3-phosphoglycerate + ATP = (2R)-3-phospho-glyceroyl phosphate + ADP. The protein operates within carbohydrate degradation; glycolysis; pyruvate from D-glyceraldehyde 3-phosphate: step 2/5. The protein is Phosphoglycerate kinase of Synechococcus sp. (strain CC9311).